The chain runs to 563 residues: MDYKVKVAQVIEQAVDGKLSQEDILAKIEKPKTLNLGDYAFPAFVLSKVLRKAPQMIASELVEKIDQTGFEKVEAVGPYVNFFLDKKEFSKDILSEVLSEGSAYGNQDLGHGGNVPIDMSSPNIAKPMSMGHLRSTVIGNSLALLLEKVNYKPIKIDHLGDWGTQFGKLIVAYKLWGSEEEVKADPINNLLKYYVRFHEEDVNNPELDEEAREWFKKLEDGDEEALKLWKWFREESLKKFTEVYDRLNITFDSYNGEAFYNDKMDEITDLLQEKGLLKESQGAEIVDLEKYDLNPALIRKTDGATLYITRDLAAALYRYRTYDFVQSLYVVGQEQTNHFKQLKAVLKEMGYDWSDDIHHIPFGLITSGGKKLSTRSGRVILLEEVLDDAVKLANKQIEEKNPNLADKEEVAEAVGVGAVVFHDLKNERINSFDFNLDEVVRFEGETGPYVQYSHARAMSILRKAGDLELDSDNLEISDPEAWQTLRLLAAFPETVKKAVSEYEPSVVAKYAIHLAKAFNKYYAHSRILNDDAEKNARLALVQSVATTLKESLRLLGVKAPNEM.

The short motif at 122–132 (PNIAKPMSMGH) is the 'HIGH' region element.

This sequence belongs to the class-I aminoacyl-tRNA synthetase family. In terms of assembly, monomer.

Its subcellular location is the cytoplasm. It catalyses the reaction tRNA(Arg) + L-arginine + ATP = L-arginyl-tRNA(Arg) + AMP + diphosphate. In Ligilactobacillus salivarius (strain UCC118) (Lactobacillus salivarius), this protein is Arginine--tRNA ligase.